We begin with the raw amino-acid sequence, 382 residues long: Sphingosine 1-phosphate receptor 1 (382 aa).

Over 1-46 (MGSTRIPLVKALHSPVSDYVNYDIIVRHYNYTGKLKISADKDNGIK) the chain is Extracellular. Lys-10 carries the post-translational modification N6-acetyllysine. N-linked (GlcNAc...) asparagine glycosylation is present at Asn-30. Residues 47–68 (LISVVFILICCFIILENIFVLL) form a helical membrane-spanning segment. Residues 69–82 (TIWKTKKFHRPMYY) are Cytoplasmic-facing. Residues 83–104 (FIGNLALSDLLAGVAYTANLLL) form a helical membrane-spanning segment. Residues 105–116 (SGATTYKLTPAQ) are Extracellular-facing. The chain crosses the membrane as a helical span at residues 117-138 (WFLREGSMFVALSASVFSLLAI). 120-121 (RE) is a sphing-4-enine 1-phosphate binding site. At 139 to 160 (AIERYITMLKMKLHNGSNRFRS) the chain is on the cytoplasmic side. Residues 161-182 (FLLISACWVISLILGGLPIMGW) traverse the membrane as a helical segment. At 183–196 (NCISTLPSCSTVLP) the chain is on the extracellular side. An intrachain disulfide couples Cys-184 to Cys-191. Residues 197 to 224 (LYHKHYILFCTTVFTLLLLSIVILYCRI) form a helical membrane-spanning segment. At 225–257 (YSLVRTRSRRLTFRKNISKASRSSEKSLALLKT) the chain is on the cytoplasmic side. Residue Thr-236 is modified to Phosphothreonine; by PKB/AKT1. The chain crosses the membrane as a helical span at residues 258-278 (VIIVLGVFIACWAPLFILLLL). 265–269 (FIACW) contributes to the sphing-4-enine 1-phosphate binding site. Over 279–289 (DVGCKVKTCDI) the chain is Extracellular. A disulfide bridge links Cys-282 with Cys-287. The chain crosses the membrane as a helical span at residues 290–310 (LFRTEYFLVLAVLNSGTNPII). The Cytoplasmic segment spans residues 311-382 (YTLSNKEMRR…MSSGNVNSSS (72 aa)). Cys-328 carries the S-palmitoyl cysteine lipid modification. The disordered stretch occupies residues 349–382 (EFSRSKSDNSSHPQKDDGDNPETIMSSGNVNSSS). Phosphoserine is present on residues Ser-351 and Ser-353. Residues 351 to 366 (SRSKSDNSSHPQKDDG) show a composition bias toward basic and acidic residues. Over residues 371–382 (TIMSSGNVNSSS) the composition is skewed to polar residues.

This sequence belongs to the G-protein coupled receptor 1 family. In terms of assembly, interacts with GNAI1 and GNAI3. Interacts with CD69; this interaction promotes S1PR1 degradation. S1P-induced endothelial cell migration requires the PKB/AKT1-mediated phosphorylation of the third intracellular loop at the Thr-236 residue. Post-translationally, palmitoylated by ZDHHC5. Palmitoylation is required for targeting to plasma membrane, enabling G(i) coupling.

The protein resides in the cell membrane. It localises to the endosome. The protein localises to the membrane raft. Its function is as follows. G-protein coupled receptor for the bioactive lysosphingolipid sphingosine 1-phosphate (S1P) that seems to be coupled to the G(i) subclass of heteromeric G proteins. Signaling leads to the activation of RAC1, SRC, PTK2/FAK1 and MAP kinases. Plays an important role in cell migration, probably via its role in the reorganization of the actin cytoskeleton and the formation of lamellipodia in response to stimuli that increase the activity of the sphingosine kinase SPHK1. Required for normal chemotaxis toward sphingosine 1-phosphate. Required for normal embryonic heart development and normal cardiac morphogenesis. Plays an important role in the regulation of sprouting angiogenesis and vascular maturation. Inhibits sprouting angiogenesis to prevent excessive sprouting during blood vessel development. Required for normal egress of mature T-cells from the thymus into the blood stream and into peripheral lymphoid organs. Plays a role in the migration of osteoclast precursor cells, the regulation of bone mineralization and bone homeostasis. Plays a role in responses to oxidized 1-palmitoyl-2-arachidonoyl-sn-glycero-3-phosphocholine by pulmonary endothelial cells and in the protection against ventilator-induced lung injury. The polypeptide is Sphingosine 1-phosphate receptor 1 (S1PR1) (Bos taurus (Bovine)).